A 317-amino-acid polypeptide reads, in one-letter code: 4-hydroxy-3-methylbut-2-enyl diphosphate reductase (317 aa).

C12 contributes to the [4Fe-4S] cluster binding site. Residues H41 and H74 each coordinate (2E)-4-hydroxy-3-methylbut-2-enyl diphosphate. Residues H41 and H74 each contribute to the dimethylallyl diphosphate site. Residues H41 and H74 each contribute to the isopentenyl diphosphate site. [4Fe-4S] cluster is bound at residue C97. Residue H125 coordinates (2E)-4-hydroxy-3-methylbut-2-enyl diphosphate. Residue H125 participates in dimethylallyl diphosphate binding. H125 provides a ligand contact to isopentenyl diphosphate. Catalysis depends on E127, which acts as the Proton donor. T168 provides a ligand contact to (2E)-4-hydroxy-3-methylbut-2-enyl diphosphate. C198 contributes to the [4Fe-4S] cluster binding site. The (2E)-4-hydroxy-3-methylbut-2-enyl diphosphate site is built by S226, S227, N228, and S270. 4 residues coordinate dimethylallyl diphosphate: S226, S227, N228, and S270. Isopentenyl diphosphate-binding residues include S226, S227, N228, and S270.

The protein belongs to the IspH family. In terms of assembly, homodimer. [4Fe-4S] cluster is required as a cofactor.

It carries out the reaction isopentenyl diphosphate + 2 oxidized [2Fe-2S]-[ferredoxin] + H2O = (2E)-4-hydroxy-3-methylbut-2-enyl diphosphate + 2 reduced [2Fe-2S]-[ferredoxin] + 2 H(+). It catalyses the reaction dimethylallyl diphosphate + 2 oxidized [2Fe-2S]-[ferredoxin] + H2O = (2E)-4-hydroxy-3-methylbut-2-enyl diphosphate + 2 reduced [2Fe-2S]-[ferredoxin] + 2 H(+). Its pathway is isoprenoid biosynthesis; dimethylallyl diphosphate biosynthesis; dimethylallyl diphosphate from (2E)-4-hydroxy-3-methylbutenyl diphosphate: step 1/1. The protein operates within isoprenoid biosynthesis; isopentenyl diphosphate biosynthesis via DXP pathway; isopentenyl diphosphate from 1-deoxy-D-xylulose 5-phosphate: step 6/6. Catalyzes the conversion of 1-hydroxy-2-methyl-2-(E)-butenyl 4-diphosphate (HMBPP) into a mixture of isopentenyl diphosphate (IPP) and dimethylallyl diphosphate (DMAPP). Acts in the terminal step of the DOXP/MEP pathway for isoprenoid precursor biosynthesis. This Edwardsiella ictaluri (strain 93-146) protein is 4-hydroxy-3-methylbut-2-enyl diphosphate reductase.